Consider the following 921-residue polypeptide: Isoleucine--tRNA ligase (921 aa).

Residues 57-67 (PYANGDIHMGH) carry the 'HIGH' region motif. Glu-553 lines the L-isoleucyl-5'-AMP pocket. Positions 594–598 (KMSKS) match the 'KMSKS' region motif. ATP is bound at residue Lys-597.

The protein belongs to the class-I aminoacyl-tRNA synthetase family. IleS type 1 subfamily. In terms of assembly, monomer.

The protein resides in the cytoplasm. It catalyses the reaction tRNA(Ile) + L-isoleucine + ATP = L-isoleucyl-tRNA(Ile) + AMP + diphosphate. Its function is as follows. Catalyzes the attachment of isoleucine to tRNA(Ile). As IleRS can inadvertently accommodate and process structurally similar amino acids such as valine, to avoid such errors it has two additional distinct tRNA(Ile)-dependent editing activities. One activity is designated as 'pretransfer' editing and involves the hydrolysis of activated Val-AMP. The other activity is designated 'posttransfer' editing and involves deacylation of mischarged Val-tRNA(Ile). In Bacillus subtilis (strain 168), this protein is Isoleucine--tRNA ligase.